We begin with the raw amino-acid sequence, 358 residues long: Protein RecA (358 aa).

Position 67-74 (67-74 (GPESSGKT)) interacts with ATP.

The protein belongs to the RecA family.

The protein localises to the cytoplasm. In terms of biological role, can catalyze the hydrolysis of ATP in the presence of single-stranded DNA, the ATP-dependent uptake of single-stranded DNA by duplex DNA, and the ATP-dependent hybridization of homologous single-stranded DNAs. It interacts with LexA causing its activation and leading to its autocatalytic cleavage. In Xenorhabdus nematophila (strain ATCC 19061 / DSM 3370 / CCUG 14189 / LMG 1036 / NCIMB 9965 / AN6), this protein is Protein RecA.